Reading from the N-terminus, the 393-residue chain is N-acyl-phosphatidylethanolamine-hydrolyzing phospholipase D (393 aa).

Methionine 1 is subject to N-acetylmethionine. Positions 1–16 (MDENESNQSLMTSSQY) are enriched in polar residues. Residues 1–40 (MDENESNQSLMTSSQYPKEAVRKRQNSARNSGASDSSRFS) are disordered. Histidine 185 and histidine 187 together coordinate Zn(2+). An an N-acyl-1,2-diacyl-sn-glycero-3-phosphoethanolamine-binding site is contributed by tyrosine 188. Positions 189, 190, and 253 each coordinate Zn(2+). Residues lysine 256 and methionine 260 each coordinate deoxycholate. Aspartate 284 contacts Zn(2+). Histidine 321 is an an N-acyl-1,2-diacyl-sn-glycero-3-phosphoethanolamine binding site. Histidine 343 provides a ligand contact to Zn(2+). Deoxycholate is bound at residue alanine 348.

The protein belongs to the NAPE-PLD family. As to quaternary structure, homodimer. Bile acids promote the assembly of inactive monomers into an active dimer and enable catalysis. Requires Zn(2+) as cofactor. As to expression, widely expressed. Highest expression in brain, kidney and testis (at protein level). Expressed in adipose tissue (at protein level).

Its subcellular location is the golgi apparatus membrane. It localises to the early endosome membrane. The protein resides in the nucleus envelope. It is found in the nucleus. The protein localises to the nucleoplasm. The catalysed reaction is an N-acyl-1,2-diacyl-sn-glycero-3-phosphoethanolamine + H2O = an N-acylethanolamine + a 1,2-diacyl-sn-glycero-3-phosphate + H(+). The enzyme catalyses N-butanoyl-1-hexadecanoyl-2-(9Z,12Z-octadecadienoyl)-sn-glycero-3-phosphoethanolamine + H2O = N-butanoyl ethanolamine + 1-hexadecanoyl-2-(9Z,12Z-octadecadienoyl)-sn-glycero-3-phosphate + H(+). It carries out the reaction N-hexanoyl-1-hexadecanoyl-2-(9Z,12Z-octadecadienoyl)-sn-glycero-3-phosphoethanolamine + H2O = N-hexanoyl ethanolamine + 1-hexadecanoyl-2-(9Z,12Z-octadecadienoyl)-sn-glycero-3-phosphate + H(+). It catalyses the reaction N-octanoyl-1-hexadecanoyl-2-(9Z,12Z-octadecadienoyl)-sn-glycero-3-phosphoethanolamine + H2O = N-octanoyl ethanolamine + 1-hexadecanoyl-2-(9Z,12Z-octadecadienoyl)-sn-glycero-3-phosphate + H(+). The catalysed reaction is N-decanoyl-1-hexadecanoyl-2-(9Z,12Z-octadecadienoyl)-sn-glycero-3-phosphoethanolamine + H2O = N-decanoyl ethanolamine + 1-hexadecanoyl-2-(9Z,12Z-octadecadienoyl)-sn-glycero-3-phosphate + H(+). The enzyme catalyses N-dodecanoyl-1,2-di-(9Z-octadecenoyl)-sn-glycero-3-phosphoethanolamine + H2O = N-dodecanoylethanolamine + 1,2-di-(9Z-octadecenoyl)-sn-glycero-3-phosphate + H(+). It carries out the reaction N-tetradecanoyl-1,2-di-(9Z-octadecenoyl)-sn-glycero-3-phosphoethanolamine + H2O = N-tetradecanoylethanolamine + 1,2-di-(9Z-octadecenoyl)-sn-glycero-3-phosphate + H(+). It catalyses the reaction N-hexadecanoyl-1,2-di-(9Z-octadecenoyl)-sn-glycero-3-phosphoethanolamine + H2O = N-hexadecanoylethanolamine + 1,2-di-(9Z-octadecenoyl)-sn-glycero-3-phosphate + H(+). The catalysed reaction is N,1-dihexadecanoyl-2-(9Z,12Z-octadecadienoyl)-sn-glycero-3-phosphoethanolamine + H2O = 1-hexadecanoyl-2-(9Z,12Z-octadecadienoyl)-sn-glycero-3-phosphate + N-hexadecanoylethanolamine + H(+). The enzyme catalyses N-octadecanoyl-1,2-di-(9Z-octadecenoyl)-sn-glycero-3-phosphoethanolamine + H2O = N-octadecanoyl ethanolamine + 1,2-di-(9Z-octadecenoyl)-sn-glycero-3-phosphate + H(+). It carries out the reaction N,1,2-tri-(9Z-octadecenoyl)-sn-glycero-3-phosphoethanolamine + H2O = N-(9Z-octadecenoyl) ethanolamine + 1,2-di-(9Z-octadecenoyl)-sn-glycero-3-phosphate + H(+). It catalyses the reaction N-(5Z,8Z,11Z,14Z-eicosatetraenoyl)-1,2-diacyl-sn-glycero-3-phosphoethanolamine + H2O = N-(5Z,8Z,11Z,14Z-eicosatetraenoyl)-ethanolamine + a 1,2-diacyl-sn-glycero-3-phosphate + H(+). The catalysed reaction is N-(5Z,8Z,11Z,14Z-eicosatetraenoyl)-1,2-di-(9Z-octadecenoyl)-sn-glycero-3-phosphoethanolamine + H2O = N-(5Z,8Z,11Z,14Z-eicosatetraenoyl)-ethanolamine + 1,2-di-(9Z-octadecenoyl)-sn-glycero-3-phosphate + H(+). The enzyme catalyses 1-O-(1Z-octadecenoyl)-2-(9Z-octadecenoyl)-sn-glycero-3-phospho-N-hexadecanoyl-ethanolamine + H2O = 1-O-(1Z-octadecenoyl)-2-(9Z-octadecenoyl)-sn-glycero-3-phosphate + N-hexadecanoylethanolamine + H(+). It carries out the reaction N,1-diacyl-sn-glycero-3-phosphoethanolamine + H2O = an N-acylethanolamine + a 1-acyl-sn-glycero-3-phosphate + H(+). It catalyses the reaction N,1-dihexadecanoyl-sn-glycero-3-phosphoethanolamine + H2O = N-hexadecanoylethanolamine + 1-hexadecanoyl-sn-glycero-3-phosphate + H(+). The catalysed reaction is N-(5Z,8Z,11Z,14Z-eicosatetraenoyl)-1-(9Z-octadecenoyl)-sn-glycero-3-phosphoethanolamine + H2O = N-(5Z,8Z,11Z,14Z-eicosatetraenoyl)-ethanolamine + 1-(9Z-octadecenoyl)-sn-glycero-3-phosphate + H(+). Its activity is regulated as follows. Activated by divalent cations. Activated by bile acids and their conjugates, except for lithocholic acid which is rather inhibitory. Binding of deoxycholic acid favors the selective release of anandamide and likely other unsatured long FAEs. Inhibited by phosphatidylethanolamines. In terms of biological role, D-type phospholipase that hydrolyzes N-acyl-phosphatidylethanolamines (NAPEs) to produce bioactive N-acylethanolamines/fatty acid ethanolamides (NAEs/FAEs) and phosphatidic acid. Cleaves the terminal phosphodiester bond of diacyl- and alkenylacyl-NAPEs, primarily playing a role in the generation of long-chain saturated and monounsaturated NAEs in the brain. May control NAPE homeostasis in dopaminergic neuron membranes and regulate neuron survival, partly through RAC1 activation. As a regulator of lipid metabolism in the adipose tissue, mediates the crosstalk between adipocytes, gut microbiota and immune cells to control body temperature and weight. In particular, regulates energy homeostasis by promoting cold-induced brown or beige adipocyte differentiation program to generate heat from fatty acids and glucose. Has limited D-type phospholipase activity toward N-acyl lyso-NAPEs. This chain is N-acyl-phosphatidylethanolamine-hydrolyzing phospholipase D (NAPEPLD), found in Homo sapiens (Human).